Consider the following 2551-residue polypeptide: Probable polyketide synthase 13 (2551 aa).

Positions 10 to 434 constitute a Ketosynthase family 3 (KS3) domain; sequence ENDVAIIGIG…GSNCCLILSQ (425 aa). Residues Cys176, His317, and His358 each act as for beta-ketoacyl synthase activity in the active site. Positions 621–654 are acyl/malonyl transferase; that stretch reads GIEVSFIIGHSLGEIPAAYCSGMINIDTLCYLIY. The active-site For acyl/malonyl transferase activity is the Ser631. The interval 928–1057 is N-terminal hotdog fold; sequence TDNLGYLNEN…GDFQLSNHSS (130 aa). A PKS/mFAS DH domain is found at 928 to 1226; sequence TDNLGYLNEN…CTSLTPIKES (299 aa). Catalysis depends on His961, which acts as the Proton acceptor; for dehydratase activity. The interval 1076–1226 is C-terminal hotdog fold; that stretch reads NLTKLSRDEL…CTSLTPIKES (151 aa). Asp1136 functions as the Proton donor; for dehydratase activity in the catalytic mechanism. In terms of domain architecture, Carrier spans 2465-2542; that stretch reads DCQTIIKDSF…SSIQYTINSF (78 aa). At Ser2502 the chain carries O-(pantetheine 4'-phosphoryl)serine.

It depends on pantetheine 4'-phosphate as a cofactor.

In terms of biological role, probable polyketide synthase. The protein is Probable polyketide synthase 13 (pks13) of Dictyostelium discoideum (Social amoeba).